The following is a 525-amino-acid chain: Putative ribose/galactose/methyl galactoside import ATP-binding protein (525 aa).

Positions 1–20 are disordered; the sequence is MSGSATASPPAKPDLPSSDG. 2 consecutive ABC transporter domains span residues 33–269 and 279–523; these read LEIS…VGRE and KPAG…SGHR. Residue 65–72 participates in ATP binding; sequence GENGAGKS.

It belongs to the ABC transporter superfamily. Carbohydrate importer 2 (CUT2) (TC 3.A.1.2) family.

The protein localises to the cell inner membrane. The enzyme catalyses D-ribose(out) + ATP + H2O = D-ribose(in) + ADP + phosphate + H(+). The catalysed reaction is D-galactose(out) + ATP + H2O = D-galactose(in) + ADP + phosphate + H(+). Its function is as follows. Part of an ABC transporter complex involved in carbohydrate import. Could be involved in ribose, galactose and/or methyl galactoside import. Responsible for energy coupling to the transport system. The sequence is that of Putative ribose/galactose/methyl galactoside import ATP-binding protein from Pseudomonas syringae pv. tomato (strain ATCC BAA-871 / DC3000).